A 161-amino-acid polypeptide reads, in one-letter code: Peroxynitrite isomerase 1 (161 aa).

A GXWXGXG motif is present at residues 17-23; sequence GTWTGRG. Heme b is bound at residue H152.

The protein belongs to the nitrobindin family. In terms of assembly, homodimer. The cofactor is heme b.

It carries out the reaction peroxynitrite = nitrate. It participates in nitrogen metabolism. Its function is as follows. Heme-binding protein able to scavenge peroxynitrite and to protect free L-tyrosine against peroxynitrite-mediated nitration, by acting as a peroxynitrite isomerase that converts peroxynitrite to nitrate. Therefore, this protein likely plays a role in peroxynitrite sensing and in the detoxification of reactive nitrogen and oxygen species (RNS and ROS, respectively). Is able to bind nitric oxide (NO) in vitro, but may act as a sensor of peroxynitrite levels in vivo. The polypeptide is Peroxynitrite isomerase 1 (Mycolicibacterium paratuberculosis (strain ATCC BAA-968 / K-10) (Mycobacterium paratuberculosis)).